A 382-amino-acid chain; its full sequence is UDP-4-amino-4-deoxy-L-arabinose--oxoglutarate aminotransferase (382 aa).

Lys-183 is modified (N6-(pyridoxal phosphate)lysine).

This sequence belongs to the DegT/DnrJ/EryC1 family. ArnB subfamily. Homodimer. Pyridoxal 5'-phosphate is required as a cofactor.

It catalyses the reaction UDP-4-amino-4-deoxy-beta-L-arabinose + 2-oxoglutarate = UDP-beta-L-threo-pentopyranos-4-ulose + L-glutamate. Its pathway is nucleotide-sugar biosynthesis; UDP-4-deoxy-4-formamido-beta-L-arabinose biosynthesis; UDP-4-deoxy-4-formamido-beta-L-arabinose from UDP-alpha-D-glucuronate: step 2/3. The protein operates within bacterial outer membrane biogenesis; lipopolysaccharide biosynthesis. Functionally, catalyzes the conversion of UDP-4-keto-arabinose (UDP-Ara4O) to UDP-4-amino-4-deoxy-L-arabinose (UDP-L-Ara4N). The modified arabinose is attached to lipid A and is required for resistance to polymyxin and cationic antimicrobial peptides. This Pseudomonas aeruginosa (strain LESB58) protein is UDP-4-amino-4-deoxy-L-arabinose--oxoglutarate aminotransferase.